We begin with the raw amino-acid sequence, 682 residues long: Polyadenylate-binding protein 5 (682 aa).

4 consecutive RRM domains span residues 59–136 (SSLY…LSNR), 146–223 (GNVF…HFVR), 239–316 (TNVY…RAQK), and 342–419 (SNLY…LAQR). The 78-residue stretch at 588–665 (TISKLASDLA…ALDVLRRSAD (78 aa)) folds into the PABC domain. The residue at position 600 (Ser-600) is a Phosphoserine.

Belongs to the polyadenylate-binding protein type-1 family. In terms of tissue distribution, expressed predominantly in immature flowers but also at lower levels in mature flowers and siliques. Detected in tapetum, pollen, ovules and developing seeds. Also detected in primary inflorescences and immature siliques.

It is found in the cytoplasm. The protein localises to the nucleus. Functionally, binds the poly(A) tail of mRNA. Appears to be an important mediator of the multiple roles of the poly(A) tail in mRNA biogenesis, stability and translation. This Arabidopsis thaliana (Mouse-ear cress) protein is Polyadenylate-binding protein 5 (PAB5).